Consider the following 65-residue polypeptide: Large ribosomal subunit protein uL29 (65 aa).

It belongs to the universal ribosomal protein uL29 family.

This chain is Large ribosomal subunit protein uL29, found in Lactobacillus johnsonii (strain CNCM I-12250 / La1 / NCC 533).